The chain runs to 115 residues: U3-lycotoxin-Ls1a (115 aa).

The N-terminal stretch at 1–20 is a signal peptide; sequence MKFVLLFGVLLVTLFSYSSA. Positions 21–44 are excised as a propeptide; it reads EMLDDFDQADEEELLSLIEKEEAR. 4 cysteine pairs are disulfide-bonded: Cys48–Cys63, Cys55–Cys72, Cys62–Cys87, and Cys74–Cys85.

Belongs to the neurotoxin 19 (CSTX) family. 01 subfamily. As to expression, expressed by the venom gland.

The protein localises to the secreted. This is U3-lycotoxin-Ls1a from Lycosa singoriensis (Wolf spider).